We begin with the raw amino-acid sequence, 279 residues long: Large ribosomal subunit protein mL46 (279 aa).

Position 230 is an N6-acetyllysine (lysine 230).

Belongs to the mitochondrion-specific ribosomal protein mL46 family. As to quaternary structure, component of the mitochondrial ribosome large subunit (39S) which comprises a 16S rRNA and about 50 distinct proteins.

It is found in the mitochondrion. This Pongo abelii (Sumatran orangutan) protein is Large ribosomal subunit protein mL46 (MRPL46).